Consider the following 518-residue polypeptide: Probable G-protein coupled receptor Mth-like 2 (518 aa).

The signal sequence occupies residues 1-26; sequence MIASSKMLLSASILIYFLLNLQSSSA. Topologically, residues 27-220 are extracellular; the sequence is EIADCSFYDT…CLILPSRTGQ (194 aa). 5 cysteine pairs are disulfide-bonded: Cys-31-Cys-85, Cys-87-Cys-92, Cys-96-Cys-190, Cys-97-Cys-108, and Cys-152-Cys-211. N-linked (GlcNAc...) asparagine glycosylation occurs at Asn-47. Residues Asn-111, Asn-125, and Asn-201 are each glycosylated (N-linked (GlcNAc...) asparagine). A helical transmembrane segment spans residues 221–241; sequence TVVMITSLICLVLTIAVYLCV. Topologically, residues 242–250 are cytoplasmic; that stretch reads KKLMNLEGK. The chain crosses the membrane as a helical span at residues 251-271; sequence CFICYMMCLFFGYLFLLLDLW. Over 272–279 the chain is Extracellular; that stretch reads ELSLDFCK. A helical transmembrane segment spans residues 280 to 300; sequence AAGFLGYFFVMAAFFWLSIIS. The Cytoplasmic segment spans residues 301 to 321; that stretch reads RHYWKCLTNPCASMNIRSERA. The chain crosses the membrane as a helical span at residues 322 to 342; sequence FLLYSCFAWAMPLALTGVTYL. Residues 343–371 lie on the Extracellular side of the membrane; that stretch reads ADNVVNNEEWQPRVGDEGHCWIYTKSWSA. The helical transmembrane segment at 372-392 threads the bilayer; that stretch reads MVYFYGPMVLLILFNITMFVL. Over 393–426 the chain is Cytoplasmic; the sequence is TAKHIIDSKRTLRKIARNEGRIQKLNSDKQNYTQ. A helical membrane pass occupies residues 427-447; the sequence is FLLLFTVMGMSWSFEIFSYLV. Over 448 to 455 the chain is Extracellular; that stretch reads QREKLWVN. The chain crosses the membrane as a helical span at residues 456-476; that stretch reads IFLVADYFNWSQGVIIFVLFI. Topologically, residues 477 to 518 are cytoplasmic; it reads LRRKTLVLFKKQIFPKQRAFSRSATQSTIESISQTKRHFNMT.

This sequence belongs to the G-protein coupled receptor 2 family. Mth subfamily.

The protein localises to the cell membrane. In Drosophila melanogaster (Fruit fly), this protein is Probable G-protein coupled receptor Mth-like 2 (mthl2).